The following is a 361-amino-acid chain: Protein-L-isoaspartate O-methyltransferase domain-containing protein 2 (361 aa).

Gly2 carries the N-myristoyl glycine lipid modification. Ser64 is an active-site residue. AdoMet binding motif stretches follow at residues 85-94, 160-164, and 181-191; these read LNLGSGTGYL, YDRVY, and LKVGGILVMPL. The tract at residues 240–250 is BC-box; it reads VRSLQDLARIA. The segment covering 303-312 has biased composition (polar residues); it reads SNPSDDNSSG. The disordered stretch occupies residues 303-335; sequence SNPSDDNSSGDLEEERREEEATTPPDAKPEPPV. The tract at residues 345-348 is CUL-box; sequence LPLP.

The protein belongs to the methyltransferase superfamily. L-isoaspartyl/D-aspartyl protein methyltransferase family.

It localises to the cytoplasm. May act as a substrate recognition component of an ECS (Elongin BC-CUL5-SOCS-box protein) E3 ubiquitin ligase complex which mediates the ubiquitination and subsequent proteasomal degradation of target proteins. May bind to the methyltransferase cofactor S-adenosylmethionine (AdoMet) via the N-terminal AdoMet binding motif, but probably does not display methyltransferase activity. In Bos taurus (Bovine), this protein is Protein-L-isoaspartate O-methyltransferase domain-containing protein 2 (PCMTD2).